Here is a 691-residue protein sequence, read N- to C-terminus: Threonine--tRNA ligase (691 aa).

The segment at 1–22 (MSVPAQPAPGADGGDPRQPIRV) is disordered. One can recognise a TGS domain in the interval 1 to 73 (MSVPAQPAPG…DADAEVTPIA (73 aa)). The segment at 268 to 574 (DHRKLGVELD…LTEHYAGAFP (307 aa)) is catalytic. Residues cysteine 373, histidine 424, and histidine 551 each coordinate Zn(2+).

Belongs to the class-II aminoacyl-tRNA synthetase family. As to quaternary structure, homodimer. Requires Zn(2+) as cofactor.

It localises to the cytoplasm. The catalysed reaction is tRNA(Thr) + L-threonine + ATP = L-threonyl-tRNA(Thr) + AMP + diphosphate + H(+). Its function is as follows. Catalyzes the attachment of threonine to tRNA(Thr) in a two-step reaction: L-threonine is first activated by ATP to form Thr-AMP and then transferred to the acceptor end of tRNA(Thr). Also edits incorrectly charged L-seryl-tRNA(Thr). In Mycobacterium marinum (strain ATCC BAA-535 / M), this protein is Threonine--tRNA ligase.